A 255-amino-acid polypeptide reads, in one-letter code: Acetylglutamate kinase (255 aa).

Substrate-binding positions include 40–41 (GG), arginine 62, and asparagine 153.

Belongs to the acetylglutamate kinase family. ArgB subfamily.

It localises to the cytoplasm. It catalyses the reaction N-acetyl-L-glutamate + ATP = N-acetyl-L-glutamyl 5-phosphate + ADP. The protein operates within amino-acid biosynthesis; L-arginine biosynthesis; N(2)-acetyl-L-ornithine from L-glutamate: step 2/4. Its function is as follows. Catalyzes the ATP-dependent phosphorylation of N-acetyl-L-glutamate. The protein is Acetylglutamate kinase of Bacillus cereus (strain B4264).